A 501-amino-acid chain; its full sequence is Bifunctional purine biosynthesis protein PurH (501 aa).

An MGS-like domain is found at 1–144 (MKKRALISVF…KNFKDVVVLS (144 aa)).

Belongs to the PurH family.

It carries out the reaction (6R)-10-formyltetrahydrofolate + 5-amino-1-(5-phospho-beta-D-ribosyl)imidazole-4-carboxamide = 5-formamido-1-(5-phospho-D-ribosyl)imidazole-4-carboxamide + (6S)-5,6,7,8-tetrahydrofolate. It catalyses the reaction IMP + H2O = 5-formamido-1-(5-phospho-D-ribosyl)imidazole-4-carboxamide. It functions in the pathway purine metabolism; IMP biosynthesis via de novo pathway; 5-formamido-1-(5-phospho-D-ribosyl)imidazole-4-carboxamide from 5-amino-1-(5-phospho-D-ribosyl)imidazole-4-carboxamide (10-formyl THF route): step 1/1. The protein operates within purine metabolism; IMP biosynthesis via de novo pathway; IMP from 5-formamido-1-(5-phospho-D-ribosyl)imidazole-4-carboxamide: step 1/1. In Clostridium perfringens (strain SM101 / Type A), this protein is Bifunctional purine biosynthesis protein PurH.